The sequence spans 130 residues: Fumarate reductase subunit C (130 aa).

The next 3 helical transmembrane spans lie at 37 to 57 (VWFSILLIYGVFALKSGPAGW), 60 to 80 (FVGFLQNPLVLLINIITLLAA), and 109 to 129 (VIKALWVVTIVATAIILAVAL).

The protein belongs to the FrdC family. Part of an enzyme complex containing four subunits: a flavoprotein (FrdA), an iron-sulfur protein (FrdB), and two hydrophobic anchor proteins (FrdC and FrdD).

The protein localises to the cell inner membrane. In terms of biological role, two distinct, membrane-bound, FAD-containing enzymes are responsible for the catalysis of fumarate and succinate interconversion; fumarate reductase is used in anaerobic growth, and succinate dehydrogenase is used in aerobic growth. Anchors the catalytic components of the fumarate reductase complex to the cell inner membrane, binds quinones. The sequence is that of Fumarate reductase subunit C from Yersinia enterocolitica serotype O:8 / biotype 1B (strain NCTC 13174 / 8081).